A 165-amino-acid polypeptide reads, in one-letter code: 3-isopropylmalate dehydratase small subunit 2 (165 aa).

Belongs to the LeuD family. LeuD type 2 subfamily. In terms of assembly, heterodimer of LeuC and LeuD.

The enzyme catalyses (2R,3S)-3-isopropylmalate = (2S)-2-isopropylmalate. Its pathway is amino-acid biosynthesis; L-leucine biosynthesis; L-leucine from 3-methyl-2-oxobutanoate: step 2/4. Its function is as follows. Catalyzes the isomerization between 2-isopropylmalate and 3-isopropylmalate, via the formation of 2-isopropylmaleate. This Archaeoglobus fulgidus (strain ATCC 49558 / DSM 4304 / JCM 9628 / NBRC 100126 / VC-16) protein is 3-isopropylmalate dehydratase small subunit 2 (leuD2).